The sequence spans 141 residues: Hemoglobin subunit alpha (141 aa).

Residues 1–141 (VLSSDDKCNV…VSSVLTSKYR (141 aa)) enclose the Globin domain. Residue His58 participates in O2 binding. His87 contacts heme b.

The protein belongs to the globin family. As to quaternary structure, heterotetramer of two alpha chains and two beta chains. As to expression, red blood cells.

Involved in oxygen transport from the lung to the various peripheral tissues. Has antimicrobial activity against B.subtilis ATCC 6633. Has antioxidant activity. The chain is Hemoglobin subunit alpha from Crocodylus siamensis (Siamese crocodile).